The following is a 209-amino-acid chain: Transcription antitermination protein NusB (209 aa).

This sequence belongs to the NusB family.

Involved in transcription antitermination. Required for transcription of ribosomal RNA (rRNA) genes. Binds specifically to the boxA antiterminator sequence of the ribosomal RNA (rrn) operons. In Crocosphaera subtropica (strain ATCC 51142 / BH68) (Cyanothece sp. (strain ATCC 51142)), this protein is Transcription antitermination protein NusB.